The sequence spans 489 residues: Neuropeptide CCHamide-2 receptor (489 aa).

At 1 to 74 the chain is on the extracellular side; sequence MYASLMDVGQ…DRPETYIVTV (74 aa). N-linked (GlcNAc...) asparagine glycosylation is found at Asn-25 and Asn-50. The chain crosses the membrane as a helical span at residues 75 to 95; the sequence is LYTLIFIVGVLGNGTLVIIFF. The Cytoplasmic portion of the chain corresponds to 96–107; that stretch reads RHRSMRNIPNTY. Residues 108–128 form a helical membrane-spanning segment; it reads ILSLALADLLVILVCVPVATI. Over 129–143 the chain is Extracellular; it reads VYTQESWPFERNMCR. A disulfide bridge connects residues Cys-142 and Cys-225. Residues 144 to 164 traverse the membrane as a helical segment; the sequence is ISEFFKDISIGVSVFTLTALS. Residues 165–184 are Cytoplasmic-facing; that stretch reads GERYCAIVNPLRKLQTKPLT. A helical transmembrane segment spans residues 185–205; that stretch reads VFTAVMIWILAILLGMPSVLF. The Extracellular portion of the chain corresponds to 206–235; sequence SDIKSYPVFTATGNMTIEVCSPFRDPEYAK. A glycan (N-linked (GlcNAc...) asparagine) is linked at Asn-219. The chain crosses the membrane as a helical span at residues 236–256; the sequence is FMVAGKALVYYLLPLSIIGAL. Over 257–293 the chain is Cytoplasmic; it reads YIMMAKRLHMSARNMPGEQQSMQSRTQARARLHVARM. A helical transmembrane segment spans residues 294–314; sequence VVAFVVVFFICFFPYHVFELW. Residues 315-333 lie on the Extracellular side of the membrane; sequence YHFYPTAEEDFDEFWNVLR. Residues 334-354 traverse the membrane as a helical segment; it reads IVGFCTSFLNSCVNPVALYCV. The Cytoplasmic segment spans residues 355–489; the sequence is SGVFRQHFNR…NRYESGVMRY (135 aa). A disordered region spans residues 438–468; sequence SFHRQDSMPLQHGNAHGGGAGGGSSGLGAGG. A compositionally biased stretch (gly residues) spans 452-468; the sequence is AHGGGAGGGSSGLGAGG.

Belongs to the G-protein coupled receptor 1 family. In terms of tissue distribution, highly expressed in larval brain. Also highly expressed in adult brain with very low levels in larval and adult gut.

It localises to the cell membrane. Functionally, receptor for the neuropeptide CCHamide-2. This chain is Neuropeptide CCHamide-2 receptor, found in Drosophila melanogaster (Fruit fly).